A 370-amino-acid polypeptide reads, in one-letter code: Aminomethyltransferase (370 aa).

The protein belongs to the GcvT family. In terms of assembly, the glycine cleavage system is composed of four proteins: P, T, L and H.

The catalysed reaction is N(6)-[(R)-S(8)-aminomethyldihydrolipoyl]-L-lysyl-[protein] + (6S)-5,6,7,8-tetrahydrofolate = N(6)-[(R)-dihydrolipoyl]-L-lysyl-[protein] + (6R)-5,10-methylene-5,6,7,8-tetrahydrofolate + NH4(+). In terms of biological role, the glycine cleavage system catalyzes the degradation of glycine. The chain is Aminomethyltransferase from Clostridium botulinum (strain Langeland / NCTC 10281 / Type F).